Reading from the N-terminus, the 670-residue chain is Aurofusarin cluster transcription factor aurR2 (670 aa).

A DNA-binding region (zn(2)-C6 fungal-type) is located at residues 12 to 38; the sequence is CVPCQHRKIRCNGQTPCAYCIRTGKEC. 2 disordered regions span residues 57 to 76 and 92 to 115; these read RLTAAQTGSPSGDGQVIVSG and GDEMQGKDVSPDPERPPLRTRTDT. Basic and acidic residues predominate over residues 92 to 113; the sequence is GDEMQGKDVSPDPERPPLRTRT.

The protein localises to the nucleus. In terms of biological role, transcription factor that may participate in the regulation of the expression of the gene cluster that mediates the biosynthesis of aurofusarin, a red mycelium pigment which is acting as a mycotoxin. This chain is Aurofusarin cluster transcription factor aurR2, found in Gibberella zeae (strain ATCC MYA-4620 / CBS 123657 / FGSC 9075 / NRRL 31084 / PH-1) (Wheat head blight fungus).